We begin with the raw amino-acid sequence, 250 residues long: uncharacterized protein (250 aa).

This sequence belongs to the glycosyltransferase 2 family.

This is an uncharacterized protein from Haemophilus influenzae (strain ATCC 51907 / DSM 11121 / KW20 / Rd).